A 37-amino-acid chain; its full sequence is Calcitonin gene-related peptide 1 (37 aa).

Cys2 and Cys7 are oxidised to a cystine. At Phe37 the chain carries Phenylalanine amide.

It belongs to the calcitonin family.

The protein localises to the secreted. Its function is as follows. CGRP1/CALCA is a peptide hormone that induces vasodilation mediated by the CALCRL-RAMP1 receptor complex. Dilates a variety of vessels including the coronary, cerebral and systemic vasculature. Its abundance in the CNS also points toward a neurotransmitter or neuromodulator role. It also elevates platelet cAMP. CGRP1 can also bind and activate CALCR-RAMP1 (AMYR1) receptor complex. This Ovis aries (Sheep) protein is Calcitonin gene-related peptide 1 (CALCA).